Reading from the N-terminus, the 488-residue chain is MSQSVESRTRIKSERYESGVIPYAKMGYWDADYVIKETDILALFRITPQPGVDPIEASAAIAGESSTATWTVVWTDLLTACDLYRAKAYRVDPVPNVADQYFAYIAYDIDLFEEGSIANLTASIIGNVFGFKAVKALRLEDMRMPVAYLKTFQGPATGLIVERERMDKFGRPFLGATVKPKLGLSGKNYGRVVYEGLKGGLDFLKDDENINSQPFMRWRERFLYSMEGVNKASASAGEIKGHYLNVTAATMEDMYERAEFSKEVGSIICMIDLVIGYTAIQSMAIWARKHDMILHLHRAGNSTYSRQKNHGMNFRVICKWMRMAGVDHIHAGTVVGKLEGDPLMIKGFYNTLLESDTDINLPQGLFFAQNWASLRKVVPVASGGIHAGQMHQLLDYLGDDVVLQFGGGTIGHPDGIQAGATANRVALESMVMARNEGRNYVAEGPQILRDAAKTCGPLQTALDLWKDISFNYTSTDTADFVETPTANI.

The substrate site is built by Asn127 and Thr177. Lys179 functions as the Proton acceptor in the catalytic mechanism. Lys181 provides a ligand contact to substrate. Lys205, Asp207, and Glu208 together coordinate Mg(2+). At Lys205 the chain carries N6-carboxylysine. His297 (proton acceptor) is an active-site residue. Substrate contacts are provided by Arg298, His330, and Ser382.

It belongs to the RuBisCO large chain family. Type I subfamily. Heterohexadecamer of 8 large chains and 8 small chains. Requires Mg(2+) as cofactor.

It is found in the plastid. The protein resides in the chloroplast. The catalysed reaction is 2 (2R)-3-phosphoglycerate + 2 H(+) = D-ribulose 1,5-bisphosphate + CO2 + H2O. It carries out the reaction D-ribulose 1,5-bisphosphate + O2 = 2-phosphoglycolate + (2R)-3-phosphoglycerate + 2 H(+). Its function is as follows. RuBisCO catalyzes two reactions: the carboxylation of D-ribulose 1,5-bisphosphate, the primary event in carbon dioxide fixation, as well as the oxidative fragmentation of the pentose substrate in the photorespiration process. Both reactions occur simultaneously and in competition at the same active site. The protein is Ribulose bisphosphate carboxylase large chain of Pyropia yezoensis (Susabi-nori).